Reading from the N-terminus, the 180-residue chain is Immediate early response gene 2 protein (180 aa).

Positions 53–135 are disordered; sequence MSEKSGQSVT…KRRSKTATDS (83 aa). A compositionally biased stretch (polar residues) spans 56-92; it reads KSGQSVTEECTSHTQEPMDTSSSTATPLRETSGQSSE. Over residues 93-103 the composition is skewed to basic and acidic residues; it reads DGQRSGLEGHP.

Belongs to the IER family. In terms of assembly, interacts with FIBPB.

It localises to the nucleus. Its subcellular location is the cytoplasm. Its function is as follows. DNA-binding protein that seems to act as a transcription factor. Mediates with FIBPB FGF-signaling in Kupffer's vesicle ciliogenesis and in the establishment of laterality in the embryo. This chain is Immediate early response gene 2 protein, found in Danio rerio (Zebrafish).